Consider the following 60-residue polypeptide: Serum basic protease inhibitor (60 aa).

The 51-residue stretch at 7–57 (CLEPPYTGPCKAAMIRYFYNAKAGFCETFVYGGCRAKSNNFKSAEDCMRTC) folds into the BPTI/Kunitz inhibitor domain. 3 cysteine pairs are disulfide-bonded: Cys7/Cys57, Cys16/Cys40, and Cys32/Cys53.

The protein resides in the secreted. This inhibitor has activity very similar to that of the basic protease inhibitor from bovine tissues. This chain is Serum basic protease inhibitor, found in Bos taurus (Bovine).